A 175-amino-acid chain; its full sequence is Dual-action ribosomal maturation protein DarP (175 aa).

This sequence belongs to the DarP family.

The protein localises to the cytoplasm. Member of a network of 50S ribosomal subunit biogenesis factors which assembles along the 30S-50S interface, preventing incorrect 23S rRNA structures from forming. Promotes peptidyl transferase center (PTC) maturation. The protein is Dual-action ribosomal maturation protein DarP of Vibrio parahaemolyticus serotype O3:K6 (strain RIMD 2210633).